We begin with the raw amino-acid sequence, 236 residues long: Probable ascorbate-specific transmembrane electron transporter 2 (236 aa).

Over 1 to 11 (MAAGLGVKAAP) the chain is Cytoplasmic. Residues 12 to 32 (FTYVAHALAVAAAVMVLVWCI) form a helical membrane-spanning segment. One can recognise a Cytochrome b561 domain in the interval 15-219 (VAHALAVAAA…FGAAVVVAAV (205 aa)). The Extracellular segment spans residues 33 to 53 (SFRGGLAFEADNKNLIFNVHP). Heme b is bound at residue His-52. Residues 54–74 (VLMLIGYIILGSEAIMIYKIF) traverse the membrane as a helical segment. 67 to 75 (AIMIYKIFP) serves as a coordination point for L-ascorbate. Residues 75–84 (PKLNHDTTKL) lie on the Cytoplasmic side of the membrane. Residues 85–105 (IHLILHAIAIVLGAVGIYCAF) form a helical membrane-spanning segment. Residues His-86 and His-120 each coordinate heme b. The Extracellular portion of the chain corresponds to 106–122 (KFHNESGIANLYSLHSW). Residue 116–125 (LYSLHSWLGI) participates in monodehydro-L-ascorbate radical binding. The helical transmembrane segment at 123 to 143 (LGIGTISLYGIQWIFGFVAFF) threads the bilayer. The Cytoplasmic segment spans residues 144–153 (YPGAAPHVRR). The helical transmembrane segment at 154 to 174 (GALPWHVLFGLFVYVLTLATA) threads the bilayer. His-159 contacts heme b. Over 175–196 (ELGLLEKLTFLQSSGLDKYGAE) the chain is Extracellular. Residues 197 to 217 (AFLVNFTGLVVALFGAAVVVA) traverse the membrane as a helical segment. The Cytoplasmic portion of the chain corresponds to 218–236 (AVAPAHVEEPEGYAPIPVN).

Heme b serves as cofactor.

The protein localises to the membrane. Functionally, two-heme-containing cytochrome. Catalyzes ascorbate-dependent trans-membrane electron transfer by utilizing a concerted H(+)/e(-) transfer mechanism. This Oryza sativa subsp. japonica (Rice) protein is Probable ascorbate-specific transmembrane electron transporter 2.